The sequence spans 332 residues: Nucleoid-associated protein VVA0877 (332 aa).

It belongs to the YejK family.

It is found in the cytoplasm. The protein resides in the nucleoid. In Vibrio vulnificus (strain YJ016), this protein is Nucleoid-associated protein VVA0877.